The chain runs to 335 residues: Anthranilate phosphoribosyltransferase (335 aa).

5-phospho-alpha-D-ribose 1-diphosphate-binding positions include glycine 79, 82–83 (GD), threonine 87, 89–92 (NIST), 107–115 (KHGSRSVSS), and serine 119. An anthranilate-binding site is contributed by glycine 79. Serine 91 is a binding site for Mg(2+). Arginine 165 contacts anthranilate. Residues aspartate 223 and glutamate 224 each contribute to the Mg(2+) site.

It belongs to the anthranilate phosphoribosyltransferase family. Homodimer. Mg(2+) serves as cofactor.

The enzyme catalyses N-(5-phospho-beta-D-ribosyl)anthranilate + diphosphate = 5-phospho-alpha-D-ribose 1-diphosphate + anthranilate. It participates in amino-acid biosynthesis; L-tryptophan biosynthesis; L-tryptophan from chorismate: step 2/5. Catalyzes the transfer of the phosphoribosyl group of 5-phosphorylribose-1-pyrophosphate (PRPP) to anthranilate to yield N-(5'-phosphoribosyl)-anthranilate (PRA). This chain is Anthranilate phosphoribosyltransferase, found in Helicobacter pylori (strain Shi470).